The chain runs to 184 residues: Thymidine kinase (184 aa).

ATP contacts are provided by residues 10 to 17 (GPMYSGKT) and 83 to 86 (DEVQ). Glutamate 84 (proton acceptor) is an active-site residue. Residues cysteine 140, cysteine 143, cysteine 173, and cysteine 176 each coordinate Zn(2+).

This sequence belongs to the thymidine kinase family. As to quaternary structure, homotetramer.

The protein resides in the cytoplasm. It carries out the reaction thymidine + ATP = dTMP + ADP + H(+). In Thermotoga sp. (strain RQ2), this protein is Thymidine kinase.